The chain runs to 230 residues: Flagellar L-ring protein (230 aa).

A signal peptide spans Met1 to Gly22. Cys23 carries the N-palmitoyl cysteine lipid modification. Cys23 carries the S-diacylglycerol cysteine lipid modification.

This sequence belongs to the FlgH family. In terms of assembly, the basal body constitutes a major portion of the flagellar organelle and consists of four rings (L,P,S, and M) mounted on a central rod.

It is found in the cell outer membrane. Its subcellular location is the bacterial flagellum basal body. Its function is as follows. Assembles around the rod to form the L-ring and probably protects the motor/basal body from shearing forces during rotation. In Stenotrophomonas maltophilia (strain R551-3), this protein is Flagellar L-ring protein.